A 787-amino-acid polypeptide reads, in one-letter code: Zinc finger protein 227 (787 aa).

In terms of domain architecture, KRAB spans 23-94; that stretch reads VTFKDVAVVF…ERETQRNGHS (72 aa). C2H2-type zinc fingers lie at residues 243 to 275, 312 to 334, 340 to 362, 368 to 390, 396 to 418, 424 to 446, 452 to 474, 480 to 502, 508 to 530, 536 to 558, 564 to 586, 592 to 614, 620 to 642, 648 to 670, 676 to 698, 704 to 726, 732 to 754, and 760 to 782; these read HPCR…LQTH, YRCD…YRTH, YRCE…QRVH, YKCE…QRVH, YKCD…RRVH, YRCE…FRVH, YTCK…QNVH, FKCE…QRVH, YRCD…QVIH, YTCE…QRVH, YKCG…QRVH, YKCD…QRGH, HKCE…LSVH, and YKCN…QKVH.

Belongs to the krueppel C2H2-type zinc-finger protein family.

The protein resides in the nucleus. Functionally, may be involved in transcriptional regulation. In Bos taurus (Bovine), this protein is Zinc finger protein 227 (ZNF227).